A 124-amino-acid chain; its full sequence is 5-hydroxyisourate hydrolase (124 aa).

His15, Arg53, and Tyr121 together coordinate substrate.

Belongs to the transthyretin family. 5-hydroxyisourate hydrolase subfamily. Homotetramer.

It carries out the reaction 5-hydroxyisourate + H2O = 5-hydroxy-2-oxo-4-ureido-2,5-dihydro-1H-imidazole-5-carboxylate + H(+). In terms of biological role, catalyzes the hydrolysis of 5-hydroxyisourate (HIU) to 2-oxo-4-hydroxy-4-carboxy-5-ureidoimidazoline (OHCU). The polypeptide is 5-hydroxyisourate hydrolase (Mesorhizobium japonicum (strain LMG 29417 / CECT 9101 / MAFF 303099) (Mesorhizobium loti (strain MAFF 303099))).